The chain runs to 75 residues: Small ribosomal subunit protein bS18 (75 aa).

This sequence belongs to the bacterial ribosomal protein bS18 family. In terms of assembly, part of the 30S ribosomal subunit. Forms a tight heterodimer with protein bS6.

Binds as a heterodimer with protein bS6 to the central domain of the 16S rRNA, where it helps stabilize the platform of the 30S subunit. This chain is Small ribosomal subunit protein bS18, found in Roseobacter denitrificans (strain ATCC 33942 / OCh 114) (Erythrobacter sp. (strain OCh 114)).